We begin with the raw amino-acid sequence, 376 residues long: Chaperone protein DnaJ (376 aa).

A J domain is found at 5–70; the sequence is DFYDVLGVSK…EKKQNYDNFG (66 aa). The segment at 137–215 adopts a CR-type zinc-finger fold; the sequence is GKKQDIKFST…CNGQGNKQAS (79 aa). Residues C150, C153, C167, C170, C189, C192, C203, and C206 each coordinate Zn(2+). CXXCXGXG motif repeat units follow at residues 150 to 157, 167 to 174, 189 to 196, and 203 to 210; these read CNTCNGNG, CTVCGGNG, CPQCAGSG, and CTDCNGQG.

The protein belongs to the DnaJ family. Homodimer. It depends on Zn(2+) as a cofactor.

Its subcellular location is the cytoplasm. In terms of biological role, participates actively in the response to hyperosmotic and heat shock by preventing the aggregation of stress-denatured proteins and by disaggregating proteins, also in an autonomous, DnaK-independent fashion. Unfolded proteins bind initially to DnaJ; upon interaction with the DnaJ-bound protein, DnaK hydrolyzes its bound ATP, resulting in the formation of a stable complex. GrpE releases ADP from DnaK; ATP binding to DnaK triggers the release of the substrate protein, thus completing the reaction cycle. Several rounds of ATP-dependent interactions between DnaJ, DnaK and GrpE are required for fully efficient folding. Also involved, together with DnaK and GrpE, in the DNA replication of plasmids through activation of initiation proteins. The chain is Chaperone protein DnaJ from Pelagibacter ubique (strain HTCC1062).